The chain runs to 66 residues: Conotoxin mr5.2 (66 aa).

Residues 1-19 (MRCVPVFVILLLLIASAPT) form the signal peptide. A propeptide spanning residues 20–48 (VDAQLKTKDDMPLASFHANVKRTLQILRD) is cleaved from the precursor. Residues Glu57 and Glu61 each carry the 4-carboxyglutamate modification. Asn65 is subject to Asparagine amide.

In terms of processing, contains 2 disulfide bonds that can be either 'C1-C3, C2-C4' or 'C1-C4, C2-C3', since these disulfide connectivities have been observed for conotoxins with cysteine framework V (for examples, see AC P0DQQ7 and AC P81755). Expressed by the venom duct.

It is found in the secreted. This chain is Conotoxin mr5.2, found in Conus marmoreus (Marble cone).